The following is a 562-amino-acid chain: MIKFASFLKFRVQINGGRYWSSSPLRSVSNYVKFVFMDNAFKKYSIDTTDYQVGQDNVQKWGFDIHNPVFGISAGLVVFCLISLLLVEPVTARDALNGIKNGIIEQFDAFFMWSTNFFLLFAVGLLFSPLGKIRLGGKEATPDHSTVSWLSMLFAAGMGIGLLFWSVAEPTAYFTDWWGTPLNAEAYSADAKSLAMGATMFHWGVHGWSIYALVALALAFFAFNKGLPLSLRAAFYPIFGDRAWGWLGHVIDILAVLSTLFGLATSLGLGAQQATSGINHVFGLNGGIGTQMVVIAFVTFIAVLSVVRGIDGGVKLLSNVNMIVAFALLIFITFITFDTAMGSLVDTTMAYIQNIIPLSNPHGREDETWMHGWTVFYWAWWVSWSPFVGMFIARVSKGRTVREFLFAVIVIPTLVTLVWMSVFGGIALDQVVNKVGELGANGLTDISLTLFHVYDVLPYSSVISILSIVLILVFFITSSDSGSLVIDSITAGGKIDAPVPQRIFWACIEGSIAAVMLWVGGKEALQALQSGVVATGLPFTFVLLLMCVSLVKGLRTELSAYR.

Helical transmembrane passes span 68-88 (PVFG…LLVE), 110-130 (FFMW…FSPL), 147-167 (VSWL…FWSV), 203-223 (WGVH…FFAF), 243-263 (AWGW…LFGL), 287-307 (GIGT…LSVV), 322-342 (MIVA…TAMG), 373-393 (WTVF…MFIA), 404-424 (FLFA…SVFG), 456-476 (VLPY…VFFI), 503-523 (IFWA…GGKE), and 531-551 (GVVA…VSLV).

This sequence belongs to the BCCT transporter (TC 2.A.15) family.

The protein resides in the cell inner membrane. Functionally, involved in the uptake of osmoprotectants. Can transport glycine betaine, proline, choline and ectoine. The protein is Glycine betaine/proline/choline/ectoine transporter VP1456 of Vibrio parahaemolyticus serotype O3:K6 (strain RIMD 2210633).